The sequence spans 662 residues: Zinc finger protein 800 (662 aa).

The C2H2-type 1; degenerate zinc finger occupies 69 to 91 (FECKLCRSLFRGLPNLITHKKFY). A Glycyl lysine isopeptide (Lys-Gly) (interchain with G-Cter in SUMO2) cross-link involves residue Lys132. 2 disordered regions span residues 172-197 (ETSS…PPSI) and 205-224 (AAPT…TSDS). Positions 205 to 216 (AAPTEEQPQESQ) are enriched in low complexity. Residues 231 to 254 (LICCLCRKEFNSRRGVRRHIRKVH) form a C2H2-type 2 zinc finger. A Glycyl lysine isopeptide (Lys-Gly) (interchain with G-Cter in SUMO2) cross-link involves residue Lys280. The C2H2-type 3 zinc finger occupies 288–311 (RSCPVCCKSFATKANVRRHFDEVH). Ser318 is modified (phosphoserine). Positions 319-349 (ITPDIATKPGQPLFLDSASPKKSFKTRKQKS) are disordered. The residue at position 320 (Thr320) is a Phosphothreonine. The residue at position 337 (Ser337) is a Phosphoserine. Residues 340 to 349 (KSFKTRKQKS) show a composition bias toward basic residues. The C2H2-type 4 zinc finger occupies 357-382 (TACKCLLCKRKYSSQIMLKRHMQIVH). Residues 389–473 (ANSKREKGPN…AGGQQKTRKP (85 aa)) form a disordered region. Lys392 participates in a covalent cross-link: Glycyl lysine isopeptide (Lys-Gly) (interchain with G-Cter in SUMO2). Positions 414-434 (VESSPPSITHSPQNELKGTNH) are enriched in polar residues. 6 positions are modified to phosphoserine: Ser420, Ser424, Ser453, Ser455, Ser458, and Ser460. The span at 456–468 (PKSASPSAAGGQQ) shows a compositional bias: low complexity. A Glycyl lysine isopeptide (Lys-Gly) (interchain with G-Cter in SUMO2) cross-link involves residue Lys474. 2 consecutive C2H2-type zinc fingers follow at residues 484 to 506 (LYCK…IELH) and 517 to 540 (YKCP…TVVH). Disordered stretches follow at residues 573–597 (RGPS…PSKK) and 633–662 (HHKK…KALV). Over residues 575 to 587 (PSREEAKHNDSKQ) the composition is skewed to basic and acidic residues. A Glycyl lysine isopeptide (Lys-Gly) (interchain with G-Cter in SUMO2) cross-link involves residue Lys597. The C2H2-type 7 zinc finger occupies 616–638 (HRCNKCGKAFAKKTYLEHHKKTH). The span at 651 to 662 (TKGRSTRSKALV) shows a compositional bias: basic residues.

It belongs to the krueppel C2H2-type zinc-finger protein family.

Its subcellular location is the nucleus. In terms of biological role, may be involved in transcriptional regulation. In Mus musculus (Mouse), this protein is Zinc finger protein 800 (Znf800).